A 1060-amino-acid polypeptide reads, in one-letter code: Protein transport protein Sec16B (1060 aa).

Residues 1 to 86 (MELWAPQRLP…GDWHQPVSGV (86 aa)) are disordered. Residues 34-224 (RPVPHSWHNG…PSLASESNLL (191 aa)) are required for endoplasmic reticulum localization. The segment covering 41–50 (HNGERFHQWQ) has biased composition (basic and acidic residues). Positions 51–60 (DNRGSPQPQQ) are enriched in polar residues. Residues Ser55, Ser143, Ser167, Ser188, and Ser191 each carry the phosphoserine modification. Disordered stretches follow at residues 163–236 (ENQH…SSSY), 245–264 (APER…QADV), 711–733 (KVAG…GGTT), 770–796 (PSPQ…GTPR), and 834–1060 (PGEN…TQPC). 2 stretches are compositionally biased toward polar residues: residues 165-195 (QHSP…NSGQ) and 213-222 (NKPSLASESN). The segment covering 223 to 236 (LLQQRESGLSSSSY) has biased composition (low complexity). Phosphoserine occurs at positions 254 and 258. Positions 271-713 (APMKFYIPHV…LRRQLEQKVA (443 aa)) are central conserved domain (CCD); required for localization to endoplasmic reticulum exit sites. Residues 837–847 (NTVSQETSQPP) show a composition bias toward polar residues. Thr858 is subject to Phosphothreonine. A phosphoserine mark is found at Ser868, Ser871, Ser874, Ser882, and Ser883. Basic and acidic residues-rich tracts occupy residues 875–890 (AKED…DKNS) and 899–908 (KLGDGKEHTK). A compositionally biased stretch (low complexity) spans 909-918 (SSGFGWFSWF). Acidic residues predominate over residues 930–941 (GDEDSSDSPDSE). The span at 991 to 1001 (AAAGAGVGGLS) shows a compositional bias: gly residues. Polar residues predominate over residues 1031 to 1046 (NPSQVPQLPTATSLNR).

The protein belongs to the SEC16 family. As to quaternary structure, SEC16A and SEC16B are each present in multiple copies in a heteromeric complex. Interacts with TFG. Interacts with SEC13. As to expression, ubiquitous.

The protein localises to the endoplasmic reticulum membrane. It is found in the golgi apparatus membrane. Plays a role in the organization of the endoplasmic reticulum exit sites (ERES), also known as transitional endoplasmic reticulum (tER). Required for secretory cargo traffic from the endoplasmic reticulum to the Golgi apparatus. Involved in peroxisome biogenesis. Regulates the transport of peroxisomal biogenesis factors PEX3 and PEX16 from the ER to peroxisomes. The chain is Protein transport protein Sec16B (SEC16B) from Homo sapiens (Human).